A 211-amino-acid polypeptide reads, in one-letter code: MSTPSATVAPVKRIPYAEASRALLRDSVLDAMRDLLLTRDWSAITLSDVARAAGISRQTIYNEFGSRQGLAQGYALRLADRLVDNVHASLDANVGNFYEAFLQGFRSFFAESAADPLVISLLTGVAKPDLLQLITTDSAPIITRASARLAPAFTDTWVATTDNDANVLSRAIVRLCLSYVSMPPEADHDVAADLARLITPFAERHGVINVP.

Residues 22–82 (ALLRDSVLDA…GYALRLADRL (61 aa)) form the HTH tetR-type domain. The segment at residues 45–64 (TLSDVARAAGISRQTIYNEF) is a DNA-binding region (H-T-H motif).

Homodimer.

The protein localises to the cytoplasm. Its activity is regulated as follows. DNA-binding activity may be regulated by fatty acids. Represses the expression of the alkB-rubAB operon, which encodes the alkane hydroxylase AlkB and the rubredoxins RubA and RubB. Acts by binding to the promoter region of the operon. In addition, EMSA analysis show that AlkX can bind to the promoter region of mmpS1 and mmpL3 and to the intragenic region of mmpL11, suggesting that it may participate in the regulatory network that controls the expression of MmpL lipid transporters. The polypeptide is HTH-type transcriptional regulator AlkX (Mycobacterium tuberculosis (strain ATCC 25618 / H37Rv)).